A 205-amino-acid polypeptide reads, in one-letter code: N-(5'-phosphoribosyl)anthranilate isomerase (205 aa).

The protein belongs to the TrpF family.

It carries out the reaction N-(5-phospho-beta-D-ribosyl)anthranilate = 1-(2-carboxyphenylamino)-1-deoxy-D-ribulose 5-phosphate. It participates in amino-acid biosynthesis; L-tryptophan biosynthesis; L-tryptophan from chorismate: step 3/5. The sequence is that of N-(5'-phosphoribosyl)anthranilate isomerase from Thermotoga petrophila (strain ATCC BAA-488 / DSM 13995 / JCM 10881 / RKU-1).